The chain runs to 68 residues: Large ribosomal subunit protein uL29 (68 aa).

Residues 32–68 (QDQLKRRTGSLDNPAERTQHRRDLARVLTVLTQKTKA) form a disordered region. The span at 45–56 (PAERTQHRRDLA) shows a compositional bias: basic and acidic residues.

This sequence belongs to the universal ribosomal protein uL29 family.

This Myxococcus xanthus (strain DK1622) protein is Large ribosomal subunit protein uL29.